The chain runs to 213 residues: Na(+)-translocating NADH-quinone reductase subunit D (213 aa).

The next 7 membrane-spanning stretches (helical) occupy residues Ala-14–Val-34, Leu-42–Leu-62, Ile-77–Ile-97, Leu-101–Met-121, Phe-131–Ile-151, Leu-154–Ala-174, and Leu-183–Val-203.

It belongs to the NqrDE/RnfAE family. In terms of assembly, composed of six subunits; NqrA, NqrB, NqrC, NqrD, NqrE and NqrF.

The protein localises to the cell inner membrane. The enzyme catalyses a ubiquinone + n Na(+)(in) + NADH + H(+) = a ubiquinol + n Na(+)(out) + NAD(+). NQR complex catalyzes the reduction of ubiquinone-1 to ubiquinol by two successive reactions, coupled with the transport of Na(+) ions from the cytoplasm to the periplasm. NqrA to NqrE are probably involved in the second step, the conversion of ubisemiquinone to ubiquinol. This Chlamydia muridarum (strain MoPn / Nigg) protein is Na(+)-translocating NADH-quinone reductase subunit D.